The sequence spans 116 residues: Large ribosomal subunit protein bL20c (116 aa).

This sequence belongs to the bacterial ribosomal protein bL20 family.

The protein resides in the plastid. Its subcellular location is the chloroplast. Its function is as follows. Binds directly to 23S ribosomal RNA and is necessary for the in vitro assembly process of the 50S ribosomal subunit. It is not involved in the protein synthesizing functions of that subunit. This is Large ribosomal subunit protein bL20c (rpl20) from Marchantia polymorpha (Common liverwort).